A 320-amino-acid chain; its full sequence is Cytochrome f (320 aa).

The first 35 residues, 1–35 (MQTRNTFSWIKEQITRSISASLMIYIITRTSISNA), serve as a signal peptide directing secretion. Residues tyrosine 36, cysteine 56, cysteine 59, and histidine 60 each coordinate heme. A helical transmembrane segment spans residues 286–306 (VQGLLFFFAAVILAQIFLVLK).

Belongs to the cytochrome f family. As to quaternary structure, the 4 large subunits of the cytochrome b6-f complex are cytochrome b6, subunit IV (17 kDa polypeptide, petD), cytochrome f and the Rieske protein, while the 4 small subunits are PetG, PetL, PetM and PetN. The complex functions as a dimer. Heme is required as a cofactor.

The protein resides in the plastid. It localises to the chloroplast thylakoid membrane. Functionally, component of the cytochrome b6-f complex, which mediates electron transfer between photosystem II (PSII) and photosystem I (PSI), cyclic electron flow around PSI, and state transitions. The sequence is that of Cytochrome f from Helianthus annuus (Common sunflower).